The primary structure comprises 147 residues: Hemoglobin subunit beta (147 aa).

The residue at position 2 (Val2) is an N-acetylvaline. Residues 3–147 (HLSGEEKSAV…VANALAHKYH (145 aa)) form the Globin domain. Thr13 is modified (phosphothreonine). Ser45 is subject to Phosphoserine. Lys60 is modified (N6-acetyllysine). A heme b-binding site is contributed by His64. Lys83 is subject to N6-acetyllysine. Position 93 (His93) interacts with heme b. At Cys94 the chain carries S-nitrosocysteine. Lys145 carries the post-translational modification N6-acetyllysine.

This sequence belongs to the globin family. In terms of assembly, heterotetramer of two alpha chains and two beta chains. As to expression, red blood cells.

Functionally, involved in oxygen transport from the lung to the various peripheral tissues. The protein is Hemoglobin subunit beta (HBB) of Lepus europaeus (European hare).